Here is a 928-residue protein sequence, read N- to C-terminus: Isoleucine--tRNA ligase (928 aa).

Positions 57–67 (PFANGNIHMGH) match the 'HIGH' region motif. Glu-552 provides a ligand contact to L-isoleucyl-5'-AMP. The short motif at 593-597 (KMSKS) is the 'KMSKS' region element. Lys-596 lines the ATP pocket. Cys-887, Cys-890, Cys-907, and Cys-910 together coordinate Zn(2+).

It belongs to the class-I aminoacyl-tRNA synthetase family. IleS type 1 subfamily. Monomer. Zn(2+) is required as a cofactor.

The protein resides in the cytoplasm. The enzyme catalyses tRNA(Ile) + L-isoleucine + ATP = L-isoleucyl-tRNA(Ile) + AMP + diphosphate. Its function is as follows. Catalyzes the attachment of isoleucine to tRNA(Ile). As IleRS can inadvertently accommodate and process structurally similar amino acids such as valine, to avoid such errors it has two additional distinct tRNA(Ile)-dependent editing activities. One activity is designated as 'pretransfer' editing and involves the hydrolysis of activated Val-AMP. The other activity is designated 'posttransfer' editing and involves deacylation of mischarged Val-tRNA(Ile). The chain is Isoleucine--tRNA ligase from Lacticaseibacillus paracasei (strain ATCC 334 / BCRC 17002 / CCUG 31169 / CIP 107868 / KCTC 3260 / NRRL B-441) (Lactobacillus paracasei).